The following is a 696-amino-acid chain: Methionine--tRNA ligase (696 aa).

Positions 12–22 (PYANGAIHLGH) match the 'HIGH' region motif. The Zn(2+) site is built by Cys-143, Cys-146, Cys-156, and Cys-159. Residues 336–340 (KMSKS) carry the 'KMSKS' region motif. Residue Lys-339 coordinates ATP. The disordered stretch occupies residues 556-580 (SLAPAPEAQSQQRHAEHQQNEVTAE). The 106-residue stretch at 591 to 696 (DFMKVDLRIV…SGAQPGMRVK (106 aa)) folds into the tRNA-binding domain.

Belongs to the class-I aminoacyl-tRNA synthetase family. MetG type 1 subfamily. Homodimer. Requires Zn(2+) as cofactor.

The protein resides in the cytoplasm. It catalyses the reaction tRNA(Met) + L-methionine + ATP = L-methionyl-tRNA(Met) + AMP + diphosphate. Is required not only for elongation of protein synthesis but also for the initiation of all mRNA translation through initiator tRNA(fMet) aminoacylation. This is Methionine--tRNA ligase from Dechloromonas aromatica (strain RCB).